The following is a 151-amino-acid chain: Chaperonin GroEL (151 aa).

Position 41–45 (41–45 (DGTTT)) interacts with ATP.

This sequence belongs to the chaperonin (HSP60) family. Forms a cylinder of 14 subunits composed of two heptameric rings stacked back-to-back. Interacts with the co-chaperonin GroES.

The protein localises to the cytoplasm. The enzyme catalyses ATP + H2O + a folded polypeptide = ADP + phosphate + an unfolded polypeptide.. Together with its co-chaperonin GroES, plays an essential role in assisting protein folding. The GroEL-GroES system forms a nano-cage that allows encapsulation of the non-native substrate proteins and provides a physical environment optimized to promote and accelerate protein folding. This is Chaperonin GroEL from Mycobacteroides chelonae (Mycobacterium chelonae).